The primary structure comprises 1058 residues: MHIIKPVWLTHGGERKDFEVYSCDVSPDGSRLVTAAGDGYVRIWSTEAICNTNDPAVASKPKQLASMSNHSGTIHTVRFSPNGKYLASGADDKIVCIYTLDTNPPSHATTFGSNEAPPVENWRTVRRLIGHDNDVQDLGWSYDSSILVSVGLDSKVVVWSGHTFEKLKTISIHQSHVKGITFDPANKYFATASDDRTVRIFRFTSPAPNSTAHDQMNNFVLEQTISAPFANSPLTAYFRRCSWSPDGMHIAAANAVNGPVSSVAIINRGSWDGDINLIGHEAPVEVCAFSPRLYASQPVDKQAMDNQHGAQNLVTVIACAGGDKSLSIWITSNPRPIVVAQELAAKSLSDLAWSPDGKCLYATALDGTILAVRFEDGDLGYATAMEENEKSLTKFGTNRKGAGITETPDGLLLEEKSKAGEIKGVEGRMGALMGDDQADNITNEKPALLPSNAPTPARPSSPAPDAQKSQPNGTATPSAPEPEKPDPYQAKLERLKQRPTYTKDGKKRIAPLLVSGAGAAESSLPQARLMASVSNQVKADTPQSIVDLSKPFDGLPKGGLATLLFGNKRKLAQLEEDDDGHVEKRVALASQNGATPLLTNTPDGLLPARPQPAPTGQQPTPEFIRPAVTNPCMAMSQVRLAVPKVRNQILRAIDPNGKPTEPPSASGESSKSRVDVVFEARNPSAASLTGRAVDREPVRLTLFRGEQPLWQDFLPRTVLLVTGNQSMWAAACEDGSVYIWTPAGRRLVSALVLEAQPVILECNGPWILCISAVGMCYVWNVKHLSSPHPPVSLQPALDAAIHTLGAHPSAAPAITNARINSEGRIVVAMSNGEGYSYSPSMFTWQRISEPWWAVGSQYWNTTEAPVGNLQTADAQKDKDAKAAVSAGIIPFLERNTTSETLLRGRAYFLQRLIKVLLSREGYESFESSVSIAHLENRLAAALSLGAKEEFRLYLSMYAKRIGAEGLKMKVEELLKGLIGGLFEEDEAGTAQRLQENEQEDRNWRESSETLCGWPREVLLKEVILALGKHRDLQRVTVPYAKLLGVVDGESDVGDAMET.

7 WD repeats span residues 15-54, 69-108, 130-169, 172-211, 233-276, 279-339, and 343-384; these read RKDF…NTND, NHSG…PSHA, GHDN…KLKT, IHQS…PNST, PLTA…GDIN, GHEA…PIVV, and LAAK…YATA. 3 disordered regions span residues 427 to 488, 590 to 618, and 652 to 672; these read GRMG…PDPY, SQNG…TGQQ, and AIDP…SSKS. 2 stretches are compositionally biased toward polar residues: residues 467–477 and 590–602; these read QKSQPNGTATP and SQNG…TNTP.

It belongs to the WD repeat HIR1 family.

It is found in the nucleus. Functionally, required for replication-independent chromatin assembly and for the periodic repression of histone gene transcription during the cell cycle. The sequence is that of Protein HIR1 (HIR1) from Aspergillus oryzae (strain ATCC 42149 / RIB 40) (Yellow koji mold).